We begin with the raw amino-acid sequence, 89 residues long: Small ribosomal subunit protein uS14 (89 aa).

The protein belongs to the universal ribosomal protein uS14 family. Part of the 30S ribosomal subunit. Contacts proteins S3 and S10.

Its function is as follows. Binds 16S rRNA, required for the assembly of 30S particles and may also be responsible for determining the conformation of the 16S rRNA at the A site. The protein is Small ribosomal subunit protein uS14 of Cytophaga hutchinsonii (strain ATCC 33406 / DSM 1761 / CIP 103989 / NBRC 15051 / NCIMB 9469 / D465).